The sequence spans 428 residues: Gamma-glutamyl phosphate reductase (428 aa).

The protein belongs to the gamma-glutamyl phosphate reductase family.

It localises to the cytoplasm. The enzyme catalyses L-glutamate 5-semialdehyde + phosphate + NADP(+) = L-glutamyl 5-phosphate + NADPH + H(+). It functions in the pathway amino-acid biosynthesis; L-proline biosynthesis; L-glutamate 5-semialdehyde from L-glutamate: step 2/2. Catalyzes the NADPH-dependent reduction of L-glutamate 5-phosphate into L-glutamate 5-semialdehyde and phosphate. The product spontaneously undergoes cyclization to form 1-pyrroline-5-carboxylate. The sequence is that of Gamma-glutamyl phosphate reductase from Afipia carboxidovorans (strain ATCC 49405 / DSM 1227 / KCTC 32145 / OM5) (Oligotropha carboxidovorans).